Here is a 206-residue protein sequence, read N- to C-terminus: Large ribosomal subunit protein bL25 (206 aa).

Belongs to the bacterial ribosomal protein bL25 family. CTC subfamily. Part of the 50S ribosomal subunit; part of the 5S rRNA/L5/L18/L25 subcomplex. Contacts the 5S rRNA. Binds to the 5S rRNA independently of L5 and L18.

This is one of the proteins that binds to the 5S RNA in the ribosome where it forms part of the central protuberance. In Bartonella henselae (strain ATCC 49882 / DSM 28221 / CCUG 30454 / Houston 1) (Rochalimaea henselae), this protein is Large ribosomal subunit protein bL25.